A 1950-amino-acid polypeptide reads, in one-letter code: E3 ubiquitin-protein ligase UBR1 (1950 aa).

His-118, Cys-123, Cys-136, Cys-139, Cys-148, Cys-151, His-157, His-160, His-161, Cys-175, Cys-177, and Cys-189 together coordinate Zn(2+). Residues 121-194 (RNCGRKFKIG…SPLHCKAEEQ (74 aa)) form a UBR-type zinc finger. Phosphoserine is present on residues Ser-296 and Ser-300. The tract at residues 678-681 (HVLH) is ubiquitin-binding loop. Asp-952 is a Zn(2+) binding site. Residues 1165 to 1200 (KERKRRLAKKHQARLLAKFNNQQTKFMKEHESEFDE) form a UBC2-binding region (U2BR) region. The Zn(2+) site is built by Cys-1220, Cys-1223, Cys-1295, His-1297, His-1300, Cys-1303, Cys-1320, and Cys-1323. Residues 1220–1324 (CALCQDSSST…SNAFICPLCQ (105 aa)) form an RING-type; atypical zinc finger. Positions 1333 to 1665 (LCQTSKANTG…YEYCGIIKLI (333 aa)) are cap helical domain (CHD). Positions 1703, 1706, 1722, 1727, 1763, and 1775 each coordinate Zn(2+). Disordered stretches follow at residues 1826–1846 (RPRR…GEDG) and 1893–1950 (TLQP…REIW). Composition is skewed to acidic residues over residues 1833–1846 (TDED…GEDG) and 1934–1950 (DEDD…REIW). The residue at position 1938 (Ser-1938) is a Phosphoserine.

This sequence belongs to the E3 ubiquitin-protein ligase UBR1-like family. Interacts with UBC2. Interacts with RPN2, RPT1 and RPT6 from the 26S proteasome.

The catalysed reaction is S-ubiquitinyl-[E2 ubiquitin-conjugating enzyme]-L-cysteine + [acceptor protein]-L-lysine = [E2 ubiquitin-conjugating enzyme]-L-cysteine + N(6)-ubiquitinyl-[acceptor protein]-L-lysine.. The protein operates within protein modification; protein ubiquitination. In terms of biological role, ubiquitin ligase protein which is a component of the N-end rule pathway. Recognizes and binds to proteins bearing specific N-terminal residues that are destabilizing according to the N-end rule, leading to their ubiquitination and subsequent degradation. Recognizes both type-1 and type-2 N-degrons, containing positively charged amino acids (Arg, Lys and His) and bulky and hydrophobic amino acids, respectively. The chain is E3 ubiquitin-protein ligase UBR1 from Saccharomyces cerevisiae (strain ATCC 204508 / S288c) (Baker's yeast).